The sequence spans 184 residues: Photosystem I assembly protein Ycf4 (184 aa).

Transmembrane regions (helical) follow at residues 21–43 (NFFW…SSSY) and 58–80 (VFIP…GFYL).

This sequence belongs to the Ycf4 family.

Its subcellular location is the plastid. The protein resides in the chloroplast thylakoid membrane. Its function is as follows. Seems to be required for the assembly of the photosystem I complex. The sequence is that of Photosystem I assembly protein Ycf4 from Psilotum nudum (Whisk fern).